Reading from the N-terminus, the 256-residue chain is Thiazole synthase (256 aa).

The Schiff-base intermediate with DXP role is filled by Lys-95. 1-deoxy-D-xylulose 5-phosphate is bound by residues Gly-156, 182–183 (AG), and 204–205 (NT).

The protein belongs to the ThiG family. As to quaternary structure, homotetramer. Forms heterodimers with either ThiH or ThiS.

Its subcellular location is the cytoplasm. The enzyme catalyses [ThiS sulfur-carrier protein]-C-terminal-Gly-aminoethanethioate + 2-iminoacetate + 1-deoxy-D-xylulose 5-phosphate = [ThiS sulfur-carrier protein]-C-terminal Gly-Gly + 2-[(2R,5Z)-2-carboxy-4-methylthiazol-5(2H)-ylidene]ethyl phosphate + 2 H2O + H(+). Its pathway is cofactor biosynthesis; thiamine diphosphate biosynthesis. Functionally, catalyzes the rearrangement of 1-deoxy-D-xylulose 5-phosphate (DXP) to produce the thiazole phosphate moiety of thiamine. Sulfur is provided by the thiocarboxylate moiety of the carrier protein ThiS. In vitro, sulfur can be provided by H(2)S. This Escherichia coli O8 (strain IAI1) protein is Thiazole synthase.